Consider the following 121-residue polypeptide: UPF0102 protein BDI_2565 (121 aa).

Belongs to the UPF0102 family.

The protein is UPF0102 protein BDI_2565 of Parabacteroides distasonis (strain ATCC 8503 / DSM 20701 / CIP 104284 / JCM 5825 / NCTC 11152).